Consider the following 199-residue polypeptide: DnaJ homolog subfamily C member 5B (199 aa).

Phosphoserine occurs at positions 14 and 16. Residues 19-84 form the J domain; it reads SLYEILGLHK…SKRNIYDKYG (66 aa).

Interacts with the chaperone complex consisting of HSC70 and SGTA. Post-translationally, palmitoylated.

It localises to the membrane. This chain is DnaJ homolog subfamily C member 5B (Dnajc5b), found in Mus musculus (Mouse).